Here is a 142-residue protein sequence, read N- to C-terminus: Hemoglobin A subunit alpha-1 (142 aa).

The 141-residue stretch at 2–142 folds into the Globin domain; it reads VLTAGDKANV…VATALTSKYR (141 aa). His59 contributes to the O2 binding site. His88 lines the heme b pocket.

Belongs to the globin family. As to quaternary structure, tetramer of alpha-1, alpha-2 and two identical beta chains. As to expression, red blood cells.

Involved in oxygen transport from the lung to the various peripheral tissues. This Aldabrachelys gigantea (Aldabra giant tortoise) protein is Hemoglobin A subunit alpha-1.